A 309-amino-acid chain; its full sequence is Tagatose-6-phosphate kinase (309 aa).

The protein belongs to the carbohydrate kinase PfkB family. LacC subfamily.

The enzyme catalyses D-tagatofuranose 6-phosphate + ATP = D-tagatofuranose 1,6-bisphosphate + ADP + H(+). Its pathway is carbohydrate metabolism; D-tagatose 6-phosphate degradation; D-glyceraldehyde 3-phosphate and glycerone phosphate from D-tagatose 6-phosphate: step 1/2. This is Tagatose-6-phosphate kinase from Streptococcus pyogenes serotype M2 (strain MGAS10270).